A 505-amino-acid chain; its full sequence is MNKKLNDVLLKLDQDLIKYVKGSLDLEISGVTYSSKLVLPGFVFFALPGIRFDGHDFIEMAIQNGSNVIVHSRDMDFYSPNVTYIKVDDFSIRKFMSNFSNVFYDEPSKKLKVIGVTGTDGKSSVCYYIYLLLKKKGVKVGFISTVFFDDGSGSLIKNPYRQSTPESTEIHAFLSNMVKNGVQYAILESTSHGLDLKTARLIDVNYFAAVFTNIGHEHLEFHGTIQNYLNVKLGLFRSVSDDAGFGVINLDDFYSSEFKNAVKKSFTYSLKSSQADFFVSFIDEKIDSTRFEFYYKGVKYFANVNLLGSFNVENVMAALILVSQILNSDIQDIVDKLVCIKSLDGRMDSINLGQNFSVIIDYAHTPGAFSKLFPIFKRFATNRLISVFGSAGERDVAKRFLQGQISDIYSDLILLCDEDPRGENSMCIIKDIAKGIVNKVVNQDLFFIPDRKQAIEKAISLARAGDLVVVLGKGHESSIIYKNREVFWNEQEVVKNAILSLEKEK.

Residue S35 coordinates UDP-N-acetyl-alpha-D-muramoyl-L-alanyl-D-glutamate. An ATP-binding site is contributed by 118–124 (GTDGKSS). Residues 163–164 (ST), T190, and R200 each bind UDP-N-acetyl-alpha-D-muramoyl-L-alanyl-D-glutamate. The residue at position 232 (K232) is an N6-carboxylysine.

Belongs to the MurCDEF family. MurE subfamily. Post-translationally, carboxylation is probably crucial for Mg(2+) binding and, consequently, for the gamma-phosphate positioning of ATP.

The protein resides in the cytoplasm. The protein operates within cell wall biogenesis; peptidoglycan biosynthesis. In terms of biological role, catalyzes the addition of an amino acid to the nucleotide precursor UDP-N-acetylmuramoyl-L-alanyl-D-glutamate (UMAG) in the biosynthesis of bacterial cell-wall peptidoglycan. The polypeptide is UDP-N-acetylmuramyl-tripeptide synthetase (Borreliella afzelii (strain PKo) (Borrelia afzelii)).